We begin with the raw amino-acid sequence, 585 residues long: Arginine--tRNA ligase (585 aa).

Residues 131-141 carry the 'HIGH' region motif; that stretch reads ANPTGPMHVGH.

The protein belongs to the class-I aminoacyl-tRNA synthetase family. As to quaternary structure, monomer.

The protein localises to the cytoplasm. The enzyme catalyses tRNA(Arg) + L-arginine + ATP = L-arginyl-tRNA(Arg) + AMP + diphosphate. The sequence is that of Arginine--tRNA ligase from Brucella melitensis biotype 1 (strain ATCC 23456 / CCUG 17765 / NCTC 10094 / 16M).